We begin with the raw amino-acid sequence, 782 residues long: Endonuclease MutS2 (782 aa).

336–343 (GPNTGGKT) provides a ligand contact to ATP. Positions 707–782 (LDLRGYRYED…GFGVTVATLK (76 aa)) constitute a Smr domain.

The protein belongs to the DNA mismatch repair MutS family. MutS2 subfamily. As to quaternary structure, homodimer. Binds to stalled ribosomes, contacting rRNA.

Endonuclease that is involved in the suppression of homologous recombination and thus may have a key role in the control of bacterial genetic diversity. Its function is as follows. Acts as a ribosome collision sensor, splitting the ribosome into its 2 subunits. Detects stalled/collided 70S ribosomes which it binds and splits by an ATP-hydrolysis driven conformational change. Acts upstream of the ribosome quality control system (RQC), a ribosome-associated complex that mediates the extraction of incompletely synthesized nascent chains from stalled ribosomes and their subsequent degradation. Probably generates substrates for RQC. This is Endonuclease MutS2 from Staphylococcus aureus (strain bovine RF122 / ET3-1).